The following is a 352-amino-acid chain: MDRTETRFRKRGQIKGKITTSRQPHPQNEQSPQRSTSGYSLQEVVDDEVLGSSAPGVDPSPPCRSLGWKRKKEWSDESEEEPEKELAPEPEETWVVEMLCGLKMKLKQQRVSPILPEHHKDFNSQLAPGVDPSPPHRSFCWKRKREWWDESEESLEEEPRKVLAPEPEEIWVVEMLCGLKMKLKRRRVSLVLPEHHEAFNRLLEDPVIKRFLAWDKDLRVSDKYLLAMVIAYFSRAGLPSWQYQRIHFFLALYLANDMEEDDEDPKQNIFYFLYGKTRSRIPLVRNRRFQLCRCMNPRARKNRSQIALFQKLRFQFFCSMSGRAWVSREELEEIQAYDPEHWVWARDRARLS.

The segment at 1-90 (MDRTETRFRK…EPEKELAPEP (90 aa)) is disordered. Positions 18-40 (ITTSRQPHPQNEQSPQRSTSGYS) are enriched in polar residues. The span at 76 to 90 (DESEEEPEKELAPEP) shows a compositional bias: acidic residues.

It belongs to the Speedy/Ringo family.

This Homo sapiens (Human) protein is Speedy protein E16.